Reading from the N-terminus, the 106-residue chain is Secreted RxLR effector protein 18 (106 aa).

The first 17 residues, methionine 1–serine 17, serve as a signal peptide directing secretion. A RxLR-dEER motif is present at residues arginine 28 to arginine 39.

The protein belongs to the RxLR effector family.

The protein localises to the secreted. It localises to the host cell. Functionally, effector that may act as a suppressor of cell death to interrupt plant immunity. I. The sequence is that of Secreted RxLR effector protein 18 from Plasmopara viticola (Downy mildew of grapevine).